Here is a 305-residue protein sequence, read N- to C-terminus: GTPase Era (305 aa).

One can recognise an Era-type G domain in the interval 11–181; the sequence is RSGFVSFVGR…IKVMTDLLPE (171 aa). The interval 19–26 is G1; it reads GRPNTGKS. 19–26 is a binding site for GTP; the sequence is GRPNTGKS. The tract at residues 45–49 is G2; that stretch reads ETTRH. The segment at 66–69 is G3; sequence DTPG. GTP is bound by residues 66–70 and 130–133; these read DTPGL and TKAD. The segment at 130–133 is G4; it reads TKAD. Residues 160 to 162 are G5; the sequence is VSS. In terms of domain architecture, KH type-2 spans 212–291; sequence LKNELPHSVA…FLDLRIKVLK (80 aa).

It belongs to the TRAFAC class TrmE-Era-EngA-EngB-Septin-like GTPase superfamily. Era GTPase family. Monomer.

The protein resides in the cytoplasm. It is found in the cell membrane. An essential GTPase that binds both GDP and GTP, with rapid nucleotide exchange. Plays a role in 16S rRNA processing and 30S ribosomal subunit biogenesis and possibly also in cell cycle regulation and energy metabolism. The polypeptide is GTPase Era (Corynebacterium glutamicum (strain ATCC 13032 / DSM 20300 / JCM 1318 / BCRC 11384 / CCUG 27702 / LMG 3730 / NBRC 12168 / NCIMB 10025 / NRRL B-2784 / 534)).